A 432-amino-acid polypeptide reads, in one-letter code: MAAPMEVAVCTDSAAQLWSCVVWELHSGANLLTYRGGQAGPRGLALLNGEYLLAAQLGKNYICAWELQRKDQLQQKIMCPGPVTCLTTSPNGLYVLAGISENIYLWEVSTGNLLVILSRHYQDVSCLQFTGDSSHFISGGKDCLVLAWSLCSVLQADPSRTPAPRHVWSRHTLPITDLHCGFGGPLARVATASLDQTVKLWEVSSGELLLSVLFDVGILAVTMDLAEHYMFCGGSDGSIFQVDLCTWPGQREKSFQPEQEHGKVFRGHRNQVTCLSVSTDGSVLLSGSHDETVRLWDVQSQQCLRTVTLKGPVTNACIMLAPVSMLSSDFRPGLPLPHFNKHLLGAEHGDEPHRGGLMLRLGLHQQGSEPSYLERVEQLQAVMSSTLEKNVLGGQDQLRIRVTELEDEVRNLRKINRDLFDFSTRIITHPTK.

WD repeat units lie at residues 36–75, 78–116, 119–158, 170–211, 213–257, and 267–306; these read GGQA…QLQQ, MCPG…LLVI, RHYQ…QADP, RHTL…LLLS, LFDV…SFQP, and GHRN…CLRT.

It belongs to the WD repeat IPI3/WDR18 family. Component of the 5FMC complex, at least composed of PELP1, LAS1L, TEX10, WDR18 and SENP3; the complex interacts with methylated CHTOP and ZNF148. Interacts with NOL9. Component of the PELP1 complex, composed of at least PELP1, TEX10 and WDR18. The complex interacts with pre-60S ribosome particles.

It localises to the nucleus. The protein localises to the nucleolus. Its subcellular location is the nucleoplasm. The protein resides in the cytoplasm. It is found in the dynein axonemal particle. Functionally, functions as a component of the Five Friends of Methylated CHTOP (5FMC) complex; the 5FMC complex is recruited to ZNF148 by methylated CHTOP, leading to desumoylation of ZNF148 and subsequent transactivation of ZNF148 target genes. Component of the PELP1 complex involved in the nucleolar steps of 28S rRNA maturation and the subsequent nucleoplasmic transit of the pre-60S ribosomal subunit. May play a role during development. The sequence is that of WD repeat-containing protein 18 (WDR18) from Bos taurus (Bovine).